A 424-amino-acid chain; its full sequence is L-rhamnose isomerase (424 aa).

Positions 261, 293, and 295 each coordinate Mn(2+).

The protein belongs to the rhamnose isomerase family. Mn(2+) is required as a cofactor.

The protein localises to the cytoplasm. The catalysed reaction is L-rhamnopyranose = L-rhamnulose. It functions in the pathway carbohydrate degradation; L-rhamnose degradation; glycerone phosphate from L-rhamnose: step 1/3. Its function is as follows. Catalyzes the interconversion of L-rhamnose and L-rhamnulose. The sequence is that of L-rhamnose isomerase from Bacillus subtilis (strain 168).